The sequence spans 579 residues: Basic helix-loop-helix ARNT-like protein 2 (579 aa).

The interaction with PER2 stretch occupies residues 1–198 (MEFPRKRRGR…SPREKPIDTK (198 aa)). The short motif at 4 to 9 (PRKRRG) is the Nuclear localization signal element. Residues 40-61 (RTGVSAPSGIREAHSQMEKRRR) are disordered. The bHLH domain occupies 48 to 101 (GIREAHSQMEKRRRDKMNHLIQKLSSMIPPHIPTAHKLDKLSVLRRAVQYLRSL). Over residues 50–59 (REAHSQMEKR) the composition is skewed to basic and acidic residues. The short motif at 118–128 (IQDKELSHLIL) is the Nuclear export signal 1 element. The 72-residue stretch at 119-190 (QDKELSHLIL…KEQLSCDGSP (72 aa)) folds into the PAS 1 domain. A compositionally biased stretch (basic and acidic residues) spans 186–196 (CDGSPREKPID). Residues 186–213 (CDGSPREKPIDTKTSQVYSHPYTGRPRM) form a disordered region. Lys-226 is covalently cross-linked (Glycyl lysine isopeptide (Lys-Gly) (interchain with G-Cter in SUMO2 and SUMO3)). Lys-233 is covalently cross-linked (Glycyl lysine isopeptide (Lys-Gly) (interchain with G-Cter in SUMO2)). The PAS 2 domain maps to 296 to 366 (VPQKSGKINV…DKHKAVLQSK (71 aa)). Residues 331-339 (LGYLPQELL) carry the Nuclear export signal 2 motif. In terms of domain architecture, PAC spans 371–414 (TDSYKFRVKDGAFVTLKSEWFSFTNPWTKELEYIVSVNTLVLGR). Positions 469–536 (RLHSSSPEDA…AHPHGPLPGD (68 aa)) are disordered.

As to quaternary structure, component of the circadian core oscillator, which includes the CRY proteins, CLOCK, or NPAS2, BMAL1 or BMAL2, CSNK1D and/or CSNK1E, TIMELESS and the PER proteins. Interacts directly with CLOCK to form the BMAL2-CLOCK transactivator. Can form heterodimers or homodimers which interact directly with CLOCK to form the transcription activator. Interacts with NPAS2 and HIF1A. Interacts with PER2. Expressed in the suprachiasmatic nucleus (SCN).

The protein localises to the nucleus. Functionally, transcriptional activator which forms a core component of the circadian clock. The circadian clock, an internal time-keeping system, regulates various physiological processes through the generation of approximately 24 hour circadian rhythms in gene expression, which are translated into rhythms in metabolism and behavior. It is derived from the Latin roots 'circa' (about) and 'diem' (day) and acts as an important regulator of a wide array of physiological functions including metabolism, sleep, body temperature, blood pressure, endocrine, immune, cardiovascular, and renal function. Consists of two major components: the central clock, residing in the suprachiasmatic nucleus (SCN) of the brain, and the peripheral clocks that are present in nearly every tissue and organ system. Both the central and peripheral clocks can be reset by environmental cues, also known as Zeitgebers (German for 'timegivers'). The predominant Zeitgeber for the central clock is light, which is sensed by retina and signals directly to the SCN. The central clock entrains the peripheral clocks through neuronal and hormonal signals, body temperature and feeding-related cues, aligning all clocks with the external light/dark cycle. Circadian rhythms allow an organism to achieve temporal homeostasis with its environment at the molecular level by regulating gene expression to create a peak of protein expression once every 24 hours to control when a particular physiological process is most active with respect to the solar day. Transcription and translation of core clock components (CLOCK, NPAS2, BMAL1, BMAL2, PER1, PER2, PER3, CRY1 and CRY2) plays a critical role in rhythm generation, whereas delays imposed by post-translational modifications (PTMs) are important for determining the period (tau) of the rhythms (tau refers to the period of a rhythm and is the length, in time, of one complete cycle). A diurnal rhythm is synchronized with the day/night cycle, while the ultradian and infradian rhythms have a period shorter and longer than 24 hours, respectively. Disruptions in the circadian rhythms contribute to the pathology of cardiovascular diseases, cancer, metabolic syndromes and aging. A transcription/translation feedback loop (TTFL) forms the core of the molecular circadian clock mechanism. Transcription factors, CLOCK or NPAS2 and BMAL1 or BMAL2, form the positive limb of the feedback loop, act in the form of a heterodimer and activate the transcription of core clock genes and clock-controlled genes (involved in key metabolic processes), harboring E-box elements (5'-CACGTG-3') within their promoters. The core clock genes: PER1/2/3 and CRY1/2 which are transcriptional repressors form the negative limb of the feedback loop and interact with the CLOCK|NPAS2-BMAL1|BMAL2 heterodimer inhibiting its activity and thereby negatively regulating their own expression. This heterodimer also activates nuclear receptors NR1D1/2 and RORA/B/G, which form a second feedback loop and which activate and repress BMAL1 transcription, respectively. The CLOCK-BMAL2 heterodimer activates the transcription of SERPINE1/PAI1 and BHLHE40/DEC1. This chain is Basic helix-loop-helix ARNT-like protein 2 (Bmal2), found in Mus musculus (Mouse).